The chain runs to 196 residues: Holliday junction branch migration complex subunit RuvA (196 aa).

Positions methionine 1–proline 63 are domain I. Residues aspartate 64 to glycine 138 are domain II. A flexible linker region spans residues glycine 138–threonine 142. The tract at residues asparagine 143–arginine 196 is domain III.

The protein belongs to the RuvA family. In terms of assembly, homotetramer. Forms an RuvA(8)-RuvB(12)-Holliday junction (HJ) complex. HJ DNA is sandwiched between 2 RuvA tetramers; dsDNA enters through RuvA and exits via RuvB. An RuvB hexamer assembles on each DNA strand where it exits the tetramer. Each RuvB hexamer is contacted by two RuvA subunits (via domain III) on 2 adjacent RuvB subunits; this complex drives branch migration. In the full resolvosome a probable DNA-RuvA(4)-RuvB(12)-RuvC(2) complex forms which resolves the HJ.

Its subcellular location is the cytoplasm. Functionally, the RuvA-RuvB-RuvC complex processes Holliday junction (HJ) DNA during genetic recombination and DNA repair, while the RuvA-RuvB complex plays an important role in the rescue of blocked DNA replication forks via replication fork reversal (RFR). RuvA specifically binds to HJ cruciform DNA, conferring on it an open structure. The RuvB hexamer acts as an ATP-dependent pump, pulling dsDNA into and through the RuvAB complex. HJ branch migration allows RuvC to scan DNA until it finds its consensus sequence, where it cleaves and resolves the cruciform DNA. The protein is Holliday junction branch migration complex subunit RuvA of Mycobacterium bovis (strain ATCC BAA-935 / AF2122/97).